Here is a 303-residue protein sequence, read N- to C-terminus: Cell division protein ZipA (303 aa).

Topologically, residues 1-6 (MMQDLR) are periplasmic. The helical transmembrane segment at 7–27 (LILIIVGAIAIIALLLHGLWT) threads the bilayer. Residues 28–303 (SRKERSSLFR…RIRSTLGVQV (276 aa)) lie on the Cytoplasmic side of the membrane. 3 disordered regions span residues 39 to 61 (RPVK…DEAF), 66 to 85 (KPYA…EPAI), and 124 to 159 (EQEP…GEKE). Composition is skewed to basic and acidic residues over residues 75–85 (SHQEYKAEPAI) and 139–159 (ESER…GEKE).

The protein belongs to the ZipA family. As to quaternary structure, interacts with FtsZ via their C-terminal domains.

It localises to the cell inner membrane. Essential cell division protein that stabilizes the FtsZ protofilaments by cross-linking them and that serves as a cytoplasmic membrane anchor for the Z ring. Also required for the recruitment to the septal ring of downstream cell division proteins. This is Cell division protein ZipA from Photorhabdus laumondii subsp. laumondii (strain DSM 15139 / CIP 105565 / TT01) (Photorhabdus luminescens subsp. laumondii).